Consider the following 45-residue polypeptide: Large ribosomal subunit protein bL34 (45 aa).

The segment at 1–45 is disordered; sequence MTKRTLGGTSRKRKRVSGFRVRMRSHTGRRVIRTRRKRGRSRLAV. Positions 10 to 45 are enriched in basic residues; the sequence is SRKRKRVSGFRVRMRSHTGRRVIRTRRKRGRSRLAV.

It belongs to the bacterial ribosomal protein bL34 family.

This is Large ribosomal subunit protein bL34 from Parasynechococcus marenigrum (strain WH8102).